A 264-amino-acid chain; its full sequence is Acetyl-coenzyme A carboxylase carboxyl transferase subunit beta (264 aa).

Residues 4–264 form the CoA carboxyltransferase N-terminal domain; it reads LWVKCKQCQQ…CGNSLEGVES (261 aa). The Zn(2+) site is built by Cys8, Cys11, Cys27, and Cys29. The C4-type zinc finger occupies 8–29; sequence CKQCQQILLTKELEKNLKVCRC.

It belongs to the AccD/PCCB family. Acetyl-CoA carboxylase is a heterohexamer composed of biotin carboxyl carrier protein (AccB), biotin carboxylase (AccC) and two subunits each of ACCase subunit alpha (AccA) and ACCase subunit beta (AccD). Zn(2+) is required as a cofactor.

The protein localises to the cytoplasm. It carries out the reaction N(6)-carboxybiotinyl-L-lysyl-[protein] + acetyl-CoA = N(6)-biotinyl-L-lysyl-[protein] + malonyl-CoA. The protein operates within lipid metabolism; malonyl-CoA biosynthesis; malonyl-CoA from acetyl-CoA: step 1/1. In terms of biological role, component of the acetyl coenzyme A carboxylase (ACC) complex. Biotin carboxylase (BC) catalyzes the carboxylation of biotin on its carrier protein (BCCP) and then the CO(2) group is transferred by the transcarboxylase to acetyl-CoA to form malonyl-CoA. The polypeptide is Acetyl-coenzyme A carboxylase carboxyl transferase subunit beta (Heliobacterium modesticaldum (strain ATCC 51547 / Ice1)).